The chain runs to 724 residues: Catalase-peroxidase (724 aa).

Residues 98-226 (WHSAGTYRIA…LATVMMGLIY (129 aa)) constitute a cross-link (tryptophyl-tyrosyl-methioninium (Trp-Tyr) (with M-252)). H99 (proton acceptor) is an active-site residue. Positions 226–252 (YVNPEGVDGNPDPLKTAQDMRVTFARM) form a cross-link, tryptophyl-tyrosyl-methioninium (Tyr-Met) (with W-98). Position 267 (H267) interacts with heme b.

It belongs to the peroxidase family. Peroxidase/catalase subfamily. Homodimer or homotetramer. The cofactor is heme b. Formation of the three residue Trp-Tyr-Met cross-link is important for the catalase, but not the peroxidase activity of the enzyme.

It carries out the reaction H2O2 + AH2 = A + 2 H2O. The catalysed reaction is 2 H2O2 = O2 + 2 H2O. Functionally, bifunctional enzyme with both catalase and broad-spectrum peroxidase activity. The polypeptide is Catalase-peroxidase (Vibrio cholerae serotype O1 (strain ATCC 39541 / Classical Ogawa 395 / O395)).